A 152-amino-acid polypeptide reads, in one-letter code: Aminoglycoside N(6')-acetyltransferase type 1 (152 aa).

The 148-residue stretch at 5–152 (PLVRPVETTD…AQVRCFRKPL (148 aa)) folds into the N-acetyltransferase domain. The substrate site is built by W26, Y73, E86, and D122. An acetyl-CoA-binding site is contributed by N127.

Homodimer.

It catalyses the reaction kanamycin B + acetyl-CoA = N(6')-acetylkanamycin B + CoA + H(+). Its function is as follows. Catalyzes the transfer of an acetyl group from acetyl-CoA to the 6'-amino group of aminoglycoside molecules conferring resistance to antibiotics containing the purpurosamine ring including amikacin. This is Aminoglycoside N(6')-acetyltransferase type 1 (aacA7) from Klebsiella aerogenes (Enterobacter aerogenes).